The following is a 407-amino-acid chain: Na(+)-translocating NADH-quinone reductase subunit F (407 aa).

The helical transmembrane segment at 3 to 23 (ITLGIAMFTVIVLALAVIILF) threads the bilayer. Positions 32-126 (GDITIEINDD…SMKVELPEEV (95 aa)) constitute a 2Fe-2S ferredoxin-type domain. The [2Fe-2S] cluster site is built by Cys69, Cys75, Cys78, and Cys110. The FAD-binding FR-type domain occupies 129–269 (VKKWECTVIS…SGPFGEFFAK (141 aa)). Positions 272–389 (DAEMVFVGGG…PIMNASVIKM (118 aa)) are catalytic.

The protein belongs to the NqrF family. Composed of six subunits; NqrA, NqrB, NqrC, NqrD, NqrE and NqrF. It depends on [2Fe-2S] cluster as a cofactor. The cofactor is FAD.

It localises to the cell inner membrane. It catalyses the reaction a ubiquinone + n Na(+)(in) + NADH + H(+) = a ubiquinol + n Na(+)(out) + NAD(+). NQR complex catalyzes the reduction of ubiquinone-1 to ubiquinol by two successive reactions, coupled with the transport of Na(+) ions from the cytoplasm to the periplasm. The first step is catalyzed by NqrF, which accepts electrons from NADH and reduces ubiquinone-1 to ubisemiquinone by a one-electron transfer pathway. The polypeptide is Na(+)-translocating NADH-quinone reductase subunit F (Pasteurella multocida (strain Pm70)).